Here is a 398-residue protein sequence, read N- to C-terminus: Phosphoglycerate kinase (398 aa).

Substrate contacts are provided by residues 21-23 (DFN), R36, 59-62 (HLGR), R119, and R157. ATP-binding positions include K208, G296, E327, and 354 to 357 (GGDS).

This sequence belongs to the phosphoglycerate kinase family. In terms of assembly, monomer.

Its subcellular location is the cytoplasm. The enzyme catalyses (2R)-3-phosphoglycerate + ATP = (2R)-3-phospho-glyceroyl phosphate + ADP. The protein operates within carbohydrate degradation; glycolysis; pyruvate from D-glyceraldehyde 3-phosphate: step 2/5. In Streptococcus pneumoniae serotype 4 (strain ATCC BAA-334 / TIGR4), this protein is Phosphoglycerate kinase.